A 465-amino-acid chain; its full sequence is Chromosomal replication initiator protein DnaA (465 aa).

The interval 1-84 (MSLSLWQQCL…RFEVGSKPLV (84 aa)) is domain I, interacts with DnaA modulators. The tract at residues 84–128 (VQTISQPAQSHHNPVSVARQQPVRMAPVRPSWDNSPVQAEHTYRS) is domain II. The tract at residues 129 to 345 (NVNPKHTFDN…GALNRVIANA (217 aa)) is domain III, AAA+ region. ATP contacts are provided by G173, G175, K176, and T177. The interval 346–465 (NFTGRSITID…FSNLIRTLSS (120 aa)) is domain IV, binds dsDNA.

The protein belongs to the DnaA family. In terms of assembly, oligomerizes as a right-handed, spiral filament on DNA at oriC.

Its subcellular location is the cytoplasm. Plays an essential role in the initiation and regulation of chromosomal replication. ATP-DnaA binds to the origin of replication (oriC) to initiate formation of the DNA replication initiation complex once per cell cycle. Binds the DnaA box (a 9 base pair repeat at the origin) and separates the double-stranded (ds)DNA. Forms a right-handed helical filament on oriC DNA; dsDNA binds to the exterior of the filament while single-stranded (ss)DNA is stabiized in the filament's interior. The ATP-DnaA-oriC complex binds and stabilizes one strand of the AT-rich DNA unwinding element (DUE), permitting loading of DNA polymerase. After initiation quickly degrades to an ADP-DnaA complex that is not apt for DNA replication. Binds acidic phospholipids. The protein is Chromosomal replication initiator protein DnaA of Pectobacterium atrosepticum (strain SCRI 1043 / ATCC BAA-672) (Erwinia carotovora subsp. atroseptica).